The sequence spans 1253 residues: Elongator complex protein 1 (1253 aa).

Residues 830–1253 form a mediates dimerization region; it reads VDVNMLFDHA…KPFEKLSILI (424 aa). The span at 1126-1141 shows a compositional bias: polar residues; sequence YTKSSNSSKMTRNTSK. The disordered stretch occupies residues 1126–1153; it reads YTKSSNSSKMTRNTSKNNRRLERKRARG. The interval 1137-1155 is required for binding to tRNA; it reads RNTSKNNRRLERKRARGKK. The span at 1142-1153 shows a compositional bias: basic residues; it reads NNRRLERKRARG.

Belongs to the ELP1/IKA1 family. Homodimer. Component of the elongator complex.

It is found in the cytoplasm. It functions in the pathway tRNA modification; 5-methoxycarbonylmethyl-2-thiouridine-tRNA biosynthesis. Its function is as follows. Component of the elongator complex, a multiprotein complex which is required for multiple tRNA modifications, including mcm5U (5-methoxycarbonylmethyl uridine), mcm5s2U (5-methoxycarbonylmethyl-2-thiouridine), and ncm5U (5-carbamoylmethyl uridine). The elongator complex catalyzes formation of carboxymethyluridine in the wobble base at position 34 in tRNAs. ELP1 binds to tRNA, mediating interaction of the elongator complex with tRNA. The sequence is that of Elongator complex protein 1 from Schizosaccharomyces pombe (strain 972 / ATCC 24843) (Fission yeast).